Reading from the N-terminus, the 300-residue chain is Porphobilinogen deaminase (300 aa).

Residue cysteine 239 is modified to S-(dipyrrolylmethanemethyl)cysteine.

This sequence belongs to the HMBS family. As to quaternary structure, monomer. Requires dipyrromethane as cofactor.

The catalysed reaction is 4 porphobilinogen + H2O = hydroxymethylbilane + 4 NH4(+). It participates in porphyrin-containing compound metabolism; protoporphyrin-IX biosynthesis; coproporphyrinogen-III from 5-aminolevulinate: step 2/4. Its function is as follows. Tetrapolymerization of the monopyrrole PBG into the hydroxymethylbilane pre-uroporphyrinogen in several discrete steps. The protein is Porphobilinogen deaminase of Francisella tularensis subsp. novicida (strain U112).